The primary structure comprises 187 residues: Threonylcarbamoyl-AMP synthase (187 aa).

In terms of domain architecture, YrdC-like spans 4 to 187 (QSTIAAAITC…DAMNGKVFRG (184 aa)).

This sequence belongs to the SUA5 family. TsaC subfamily.

Its subcellular location is the cytoplasm. It catalyses the reaction L-threonine + hydrogencarbonate + ATP = L-threonylcarbamoyladenylate + diphosphate + H2O. Required for the formation of a threonylcarbamoyl group on adenosine at position 37 (t(6)A37) in tRNAs that read codons beginning with adenine. Catalyzes the conversion of L-threonine, HCO(3)(-)/CO(2) and ATP to give threonylcarbamoyl-AMP (TC-AMP) as the acyladenylate intermediate, with the release of diphosphate. This Pseudoalteromonas translucida (strain TAC 125) protein is Threonylcarbamoyl-AMP synthase.